The chain runs to 268 residues: Octanoyltransferase (268 aa).

The region spanning 47-243 (PETPDQVWLV…ALCEVLAAHE (197 aa)) is the BPL/LPL catalytic domain. Substrate-binding positions include 87 to 94 (RGGQITYH), 159 to 161 (ALG), and 172 to 174 (GVS). Residue Cys-190 is the Acyl-thioester intermediate of the active site.

This sequence belongs to the LipB family.

The protein localises to the cytoplasm. The enzyme catalyses octanoyl-[ACP] + L-lysyl-[protein] = N(6)-octanoyl-L-lysyl-[protein] + holo-[ACP] + H(+). It participates in protein modification; protein lipoylation via endogenous pathway; protein N(6)-(lipoyl)lysine from octanoyl-[acyl-carrier-protein]: step 1/2. Catalyzes the transfer of endogenously produced octanoic acid from octanoyl-acyl-carrier-protein onto the lipoyl domains of lipoate-dependent enzymes. Lipoyl-ACP can also act as a substrate although octanoyl-ACP is likely to be the physiological substrate. In Cupriavidus necator (strain ATCC 17699 / DSM 428 / KCTC 22496 / NCIMB 10442 / H16 / Stanier 337) (Ralstonia eutropha), this protein is Octanoyltransferase.